A 238-amino-acid polypeptide reads, in one-letter code: Tritrans,polycis-undecaprenyl-diphosphate synthase (geranylgeranyl-diphosphate specific) (238 aa).

Asp18 is a catalytic residue. Residue Asp18 coordinates Mg(2+). Residues Gly19–Arg22 and Ser64–Glu66 contribute to the substrate site. Residue Asn67 is the Proton acceptor of the active site. Substrate is bound by residues Arg70, Arg187, and Arg193–Ser195. Glu206 contributes to the Mg(2+) binding site.

The protein belongs to the UPP synthase family. Homodimer. It depends on Mg(2+) as a cofactor.

The catalysed reaction is geranylgeranyl diphosphate + 7 isopentenyl diphosphate = tri-trans,hepta-cis-undecaprenyl diphosphate + 7 diphosphate. Functionally, catalyzes the sequential condensation of isopentenyl diphosphate (IPP) with geranylgeranyl diphosphate (GGPP) to yield (2Z,6Z,10Z,14Z,18Z,22Z,26Z,30E,34E,38E)-undecaprenyl diphosphate (tritrans,heptacis-UPP). It is probably the precursor of glycosyl carrier lipids. This chain is Tritrans,polycis-undecaprenyl-diphosphate synthase (geranylgeranyl-diphosphate specific), found in Pyrobaculum aerophilum (strain ATCC 51768 / DSM 7523 / JCM 9630 / CIP 104966 / NBRC 100827 / IM2).